A 142-amino-acid polypeptide reads, in one-letter code: Glia maturation factor gamma (142 aa).

At serine 2 the chain carries N-acetylserine. The region spanning 4 to 139 (SLVVCDVDPE…NETWLKEKLA (136 aa)) is the ADF-H domain.

This sequence belongs to the actin-binding proteins ADF family. GMF subfamily. As to expression, expressed in rat thymus, testis, and spleen. Is present predominantly in proliferative and differentiative organs.

This chain is Glia maturation factor gamma (Gmfg), found in Rattus norvegicus (Rat).